The chain runs to 218 residues: Small ribosomal subunit protein uS3 (218 aa).

Positions 38 to 106 (LRSDLKKKLM…PVHLNIEEVK (69 aa)) constitute a KH type-2 domain.

The protein belongs to the universal ribosomal protein uS3 family. Part of the 30S ribosomal subunit. Forms a tight complex with proteins S10 and S14.

In terms of biological role, binds the lower part of the 30S subunit head. Binds mRNA in the 70S ribosome, positioning it for translation. This Legionella pneumophila (strain Lens) protein is Small ribosomal subunit protein uS3.